The chain runs to 477 residues: MPKTVSPGVQALRDVVEKVYRELREAKERGEKVGWSSSKFPCELAESFGLHVGYPENQAAGIAANRDGEVMCQAAEDIGYDNDICGYARISLAYAAGFRGANKMDKDGNYVINPHSGKQMKDANGKKVFDADGKPVIDPKTLKPFATTDNIYEIAALPEGEEKTRRQNALHKYRQMTMPMPDFVLCCNNICNCMTKWYEDIARRHNIPLIMIDVPYNEFDHVNEANVKYIRSQLDTAIRQMEEITGKKFDEDKFEQCCQNANRTAKAWLKVCDYLQYKPAPFNGFDLFNHMADVVTARGRVEAAEAFELLAKELEQHVKEGTTTAPFKEQHRIMFEGIPCWPKLPNLFKPLKANGLNITGVVYAPAFGFVYNNLDELVKAYCKAPNSVSIEQGVAWREGLIRDNKVDGVLVHYNRSCKPWSGYMPEMQRRFTKDMGIPTAGFDGDQADPRNFNAAQYETRVQGLVEAMEANDEKKGK.

Belongs to the FldB/FldC dehydratase alpha/beta subunit family. As to quaternary structure, the (R)-2-hydroxyglutaryl-CoA dehydratase enzyme system is a heterodimer composed of an alpha subunit (HgdA) and a beta subunit (HgdB). [4Fe-4S] cluster is required as a cofactor. The cofactor is FMN. It depends on Mg(2+) as a cofactor.

The protein localises to the cytoplasm. The catalysed reaction is (R)-2-hydroxyglutaryl-CoA = (2E)-glutaconyl-CoA + H2O. It participates in amino-acid degradation; L-glutamate degradation via hydroxyglutarate pathway; crotonoyl-CoA from L-glutamate: step 4/5. With respect to regulation, activated by the HgdC. Reversibly inactivated by oxidants such as 2-nitrophenol, 3-nitrophenol, 4-nitrophenol, 4-nitrobenzoate, carbonyl cyanide 4-(trifluoromethoxy)phenylhydrazone (FCCP) and chloramphenicol. Irreversibly inactivated by oxidants such as hydroxylamine and nitrite. Involved in the fermentation of L-glutamate via the hydroxyglutarate pathway. Catalyzes the reversible syn-elimination of water from (R)-2-hydroxyglutaryl-CoA to yield (E)-glutaconyl-CoA. The dehydration mechanism involves a transient one electron reduction of the thioester from (R)-2-hydroxyglutaryl-CoA, generating a ketyl radical. Prior to (E)-glutaconyl-CoA formation, the ketyl radical is subsequently reoxidized by electron transfer back to the HgdA-HgdB complex (CompD) to avoid change in oxidation state of the substrate. The appropriate redox state of dehydratase HgdA-HgdB complex (CompD) is maintained by HgdC (CompA) via hydrolysis of ATP and ATP-dependent electron transfer. Since the electron is recycled, the dehydratase is able to perform several turnovers with only catalytic amounts of ATP and substoichiometric amounts of HgdC (CompA). The protein is (R)-2-hydroxyglutaryl-CoA dehydratase, subunit alpha of Acidaminococcus fermentans (strain ATCC 25085 / DSM 20731 / CCUG 9996 / CIP 106432 / VR4).